The primary structure comprises 556 residues: MSTTTAGILFALSLALALAAVHVPLGDYMYRVYASEKHWRAERVAYRIIGADPAAEQGWGSYARSVLAFSAVSILFLFGLQLLQGRLPLHLNDPATEMTPALAWNTAVSFVTNTNWQAYSGESTQGHLVQMAGLSVQNFVSAAVGMAVAMAFVRGLARRDTGELGNFWVDLIRGSLRILLPLSIIGAIILVSGGVIQNFALHDTVVSTLSGAQQTIPGGPVASQEAIKELGTNGGGFFNANSAHPFENPTTWTNWVEIFLLSCIAFSLPRTFGRMVGSRKQGAAILAVMAVIATLSLSLMMLFQSQTHGTVPTAVGSATEGVEQRFGVADSAVFADLTTLTSTGAVDSFHDSYTSLGGLMTLFNMQLGEVAPGGVGSGLYSMLVLAVITVFVAGLMVGRTPEYLGKKITPREIKLAATYFLVTPLIVLIGTAVAMALPGQRDGMLNTGPHGLSEVLYAFTSAGNNNGSAFAGLSVNTEWYNTALGLAMVFGRFLPIILVLALAGSFARQGRTPESVGTLPTHRPQFVGMVTGVTLILVALTFLPVLALGPLAEGLH.

The next 10 helical transmembrane spans lie at 6–26, 65–85, 133–153, 176–196, 249–269, 283–303, 378–398, 419–439, 483–503, and 526–546; these read AGIL…VPLG, SVLA…LLQG, GLSV…MAFV, LRIL…GGVI, PTTW…FSLP, AAIL…MMLF, GLYS…LMVG, YFLV…ALPG, ALGL…LALA, and FVGM…LPVL.

Belongs to the KdpA family. As to quaternary structure, the system is composed of three essential subunits: KdpA, KdpB and KdpC.

The protein resides in the cell membrane. Functionally, part of the high-affinity ATP-driven potassium transport (or Kdp) system, which catalyzes the hydrolysis of ATP coupled with the electrogenic transport of potassium into the cytoplasm. This subunit binds the extracellular potassium ions and delivers the ions to the membrane domain of KdpB through an intramembrane tunnel. This is Potassium-transporting ATPase potassium-binding subunit from Mycobacterium sp. (strain KMS).